We begin with the raw amino-acid sequence, 40 residues long: Photosystem II reaction center protein J (40 aa).

Residues 8–28 (IPLWLIGTVVGTPVISLVGIF) traverse the membrane as a helical segment.

It belongs to the PsbJ family. PSII is composed of 1 copy each of membrane proteins PsbA, PsbB, PsbC, PsbD, PsbE, PsbF, PsbH, PsbI, PsbJ, PsbK, PsbL, PsbM, PsbT, PsbX, PsbY, PsbZ, Psb30/Ycf12, at least 3 peripheral proteins of the oxygen-evolving complex and a large number of cofactors. It forms dimeric complexes.

The protein resides in the plastid. It is found in the chloroplast thylakoid membrane. One of the components of the core complex of photosystem II (PSII). PSII is a light-driven water:plastoquinone oxidoreductase that uses light energy to abstract electrons from H(2)O, generating O(2) and a proton gradient subsequently used for ATP formation. It consists of a core antenna complex that captures photons, and an electron transfer chain that converts photonic excitation into a charge separation. The protein is Photosystem II reaction center protein J of Huperzia lucidula (Shining clubmoss).